A 553-amino-acid chain; its full sequence is Ubiquitin carboxyl-terminal hydrolase 17-like protein 15 (553 aa).

The USP domain occupies 80 to 375; sequence AGLQNMGNTC…QAYVLFYIQK (296 aa). C89 functions as the Nucleophile in the catalytic mechanism. The Proton acceptor role is filled by H334. Basic and acidic residues-rich tracts occupy residues 382 to 392 and 398 to 413; these read SESVSRGREPR and DTDRRATQGELKRDHP. 2 disordered regions span residues 382–413 and 491–524; these read SESVSRGREPRALGAEDTDRRATQGELKRDHP and STTPTHQESMNTGTLASLRGRARRSKGKNKHSKR. Residues 496–505 are compositionally biased toward polar residues; it reads HQESMNTGTL. Residues 510 to 524 are compositionally biased toward basic residues; it reads GRARRSKGKNKHSKR.

Belongs to the peptidase C19 family. USP17 subfamily.

The protein resides in the nucleus. Its subcellular location is the endoplasmic reticulum. The catalysed reaction is Thiol-dependent hydrolysis of ester, thioester, amide, peptide and isopeptide bonds formed by the C-terminal Gly of ubiquitin (a 76-residue protein attached to proteins as an intracellular targeting signal).. In terms of biological role, deubiquitinating enzyme that removes conjugated ubiquitin from specific proteins to regulate different cellular processes that may include cell proliferation, progression through the cell cycle, apoptosis, cell migration, and the cellular response to viral infection. The protein is Ubiquitin carboxyl-terminal hydrolase 17-like protein 15 (USP17L15) of Homo sapiens (Human).